The sequence spans 225 residues: MPIGIPKVAYRIPGESVSTYVDVYNRLYRERILFLGEDLDDEVANQLIGVMVFLNSEDDTKGIFFYINSPGGSMNSGLGVYDMIQHINVDVTTICMGLAASMASFILAGGTPGQRLMFPHARVMLHQPMGGNGGKAKYMVEESVEVKRLRELIAHLYAKRTGQPIERIRIDMNRDNFMRPRAAKEYGLIDHMITHITELDELEKDASDLRRFGGVDLTKLNKQGS.

The active-site Nucleophile is the S101. The active site involves H126.

The protein belongs to the peptidase S14 family. Component of the chloroplastic Clp protease core complex.

It localises to the plastid. It is found in the chloroplast stroma. The catalysed reaction is Hydrolysis of proteins to small peptides in the presence of ATP and magnesium. alpha-casein is the usual test substrate. In the absence of ATP, only oligopeptides shorter than five residues are hydrolyzed (such as succinyl-Leu-Tyr-|-NHMec, and Leu-Tyr-Leu-|-Tyr-Trp, in which cleavage of the -Tyr-|-Leu- and -Tyr-|-Trp bonds also occurs).. Its function is as follows. Cleaves peptides in various proteins in a process that requires ATP hydrolysis. Has a chymotrypsin-like activity. Plays a major role in the degradation of misfolded proteins. The chain is ATP-dependent Clp protease proteolytic subunit from Chlorokybus atmophyticus (Soil alga).